The following is a 210-amino-acid chain: Dephospho-CoA kinase (210 aa).

One can recognise a DPCK domain in the interval 4 to 202; the sequence is WVGLTGGIGS…AFYSGIFASK (199 aa). 12–17 lines the ATP pocket; the sequence is GSGKSA.

It belongs to the CoaE family.

It is found in the cytoplasm. The catalysed reaction is 3'-dephospho-CoA + ATP = ADP + CoA + H(+). The protein operates within cofactor biosynthesis; coenzyme A biosynthesis; CoA from (R)-pantothenate: step 5/5. In terms of biological role, catalyzes the phosphorylation of the 3'-hydroxyl group of dephosphocoenzyme A to form coenzyme A. The polypeptide is Dephospho-CoA kinase (Neisseria gonorrhoeae (strain ATCC 700825 / FA 1090)).